The following is a 358-amino-acid chain: 4-hydroxy-3-methylbut-2-en-1-yl diphosphate synthase (flavodoxin) (358 aa).

Positions 265, 268, 300, and 307 each coordinate [4Fe-4S] cluster.

The protein belongs to the IspG family. It depends on [4Fe-4S] cluster as a cofactor.

It carries out the reaction (2E)-4-hydroxy-3-methylbut-2-enyl diphosphate + oxidized [flavodoxin] + H2O + 2 H(+) = 2-C-methyl-D-erythritol 2,4-cyclic diphosphate + reduced [flavodoxin]. Its pathway is isoprenoid biosynthesis; isopentenyl diphosphate biosynthesis via DXP pathway; isopentenyl diphosphate from 1-deoxy-D-xylulose 5-phosphate: step 5/6. Converts 2C-methyl-D-erythritol 2,4-cyclodiphosphate (ME-2,4cPP) into 1-hydroxy-2-methyl-2-(E)-butenyl 4-diphosphate. This chain is 4-hydroxy-3-methylbut-2-en-1-yl diphosphate synthase (flavodoxin), found in Maridesulfovibrio salexigens (strain ATCC 14822 / DSM 2638 / NCIMB 8403 / VKM B-1763) (Desulfovibrio salexigens).